A 25-amino-acid polypeptide reads, in one-letter code: Alanine racemase (25 aa).

This sequence belongs to the alanine racemase family. Homodimer. Pyridoxal 5'-phosphate is required as a cofactor.

It catalyses the reaction L-alanine = D-alanine. It functions in the pathway amino-acid biosynthesis; D-alanine biosynthesis; D-alanine from L-alanine: step 1/1. Catalyzes the interconversion of L-alanine and D-alanine. In Pseudomonas fluorescens, this protein is Alanine racemase.